The following is a 75-amino-acid chain: UPF0270 protein PSPTO_1630 (75 aa).

It belongs to the UPF0270 family.

In Pseudomonas syringae pv. tomato (strain ATCC BAA-871 / DC3000), this protein is UPF0270 protein PSPTO_1630.